The chain runs to 504 residues: Sphingosine-1-phosphate transporter SPNS2 (504 aa).

11 helical membrane passes run 48-70, 94-114, 122-142, 182-202, 214-234, 269-289, 317-337, 351-371, 375-395, 415-435, and 460-480; these read LLRCRTPLVAAGILSFGNVLNYM, GLLQTVFICSFMVAAPIFGYL, IILSCGIFFWSAVTLLSSFIT, VMLSVFYLAIPLGSGLGYILG, WALRVSPMLGLTAGTLILIFV, VFSSLASAAVSFATGAFGIWI, LIFGAITCVTGLLGVVIGAVT, LVCAVSMLGSAIFICLIFVVA, IVGAYICIFIGETLLFLNWAI, FQGFTSHLLGDAGSPYLIGLI, and LCPFVIVLGGMFFLATALFFL.

It belongs to the major facilitator superfamily. Spinster (TC 2.A.1.49) family.

The protein resides in the cell membrane. Its subcellular location is the endosome membrane. The enzyme catalyses sphing-4-enine 1-phosphate(in) = sphing-4-enine 1-phosphate(out). It carries out the reaction sphinganine 1-phosphate(in) = sphinganine 1-phosphate(out). Functionally, lipid transporter that specifically mediates export of sphingosine-1-phosphate (sphing-4-enine 1-phosphate, S1P) and sphinganine-1-phosphate, which play critical roles in regulating heart development. Mediates the export of S1P from cells in the extraembryonic yolk syncytial layer (YSL), thereby regulating myocardial precursor migration. This is Sphingosine-1-phosphate transporter SPNS2 from Danio rerio (Zebrafish).